Here is a 117-residue protein sequence, read N- to C-terminus: uncharacterized protein (117 aa).

This is an uncharacterized protein from Homo sapiens (Human).